The sequence spans 364 residues: Paraneoplastic antigen Ma2 homolog (364 aa).

N-acetylalanine is present on Ala-2. The segment covering Glu-335–Asp-353 has biased composition (acidic residues). Positions Glu-335–Asp-364 are disordered. A compositionally biased stretch (gly residues) spans Gly-354–Asp-364.

This sequence belongs to the PNMA family.

Its subcellular location is the nucleus. The protein localises to the nucleolus. In Macaca fascicularis (Crab-eating macaque), this protein is Paraneoplastic antigen Ma2 homolog (PNMA2).